Reading from the N-terminus, the 314-residue chain is Lipoyl synthase (314 aa).

[4Fe-4S] cluster contacts are provided by Cys61, Cys66, Cys72, Cys87, Cys91, Cys94, and Ser301. The Radical SAM core domain occupies 73 to 290; it reads FGRGTATFMI…EEEAKKMGFS (218 aa).

Belongs to the radical SAM superfamily. Lipoyl synthase family. The cofactor is [4Fe-4S] cluster.

It localises to the cytoplasm. It catalyses the reaction [[Fe-S] cluster scaffold protein carrying a second [4Fe-4S](2+) cluster] + N(6)-octanoyl-L-lysyl-[protein] + 2 oxidized [2Fe-2S]-[ferredoxin] + 2 S-adenosyl-L-methionine + 4 H(+) = [[Fe-S] cluster scaffold protein] + N(6)-[(R)-dihydrolipoyl]-L-lysyl-[protein] + 4 Fe(3+) + 2 hydrogen sulfide + 2 5'-deoxyadenosine + 2 L-methionine + 2 reduced [2Fe-2S]-[ferredoxin]. The protein operates within protein modification; protein lipoylation via endogenous pathway; protein N(6)-(lipoyl)lysine from octanoyl-[acyl-carrier-protein]: step 2/2. Its function is as follows. Catalyzes the radical-mediated insertion of two sulfur atoms into the C-6 and C-8 positions of the octanoyl moiety bound to the lipoyl domains of lipoate-dependent enzymes, thereby converting the octanoylated domains into lipoylated derivatives. The protein is Lipoyl synthase of Dechloromonas aromatica (strain RCB).